The primary structure comprises 452 residues: Chromosomal replication initiator protein DnaA (452 aa).

Positions Met1 to Thr73 are domain I, interacts with DnaA modulators. Positions Thr73–Gly102 are domain II. The interval Asn103–Ala323 is domain III, AAA+ region. Residues Gly147, Gly149, Lys150, and Thr151 each coordinate ATP. The tract at residues Gln324–Lys452 is domain IV, binds dsDNA.

This sequence belongs to the DnaA family. As to quaternary structure, oligomerizes as a right-handed, spiral filament on DNA at oriC.

It localises to the cytoplasm. Plays an essential role in the initiation and regulation of chromosomal replication. ATP-DnaA binds to the origin of replication (oriC) to initiate formation of the DNA replication initiation complex once per cell cycle. Binds the DnaA box (a 9 base pair repeat at the origin) and separates the double-stranded (ds)DNA. Forms a right-handed helical filament on oriC DNA; dsDNA binds to the exterior of the filament while single-stranded (ss)DNA is stabiized in the filament's interior. The ATP-DnaA-oriC complex binds and stabilizes one strand of the AT-rich DNA unwinding element (DUE), permitting loading of DNA polymerase. After initiation quickly degrades to an ADP-DnaA complex that is not apt for DNA replication. Binds acidic phospholipids. This is Chromosomal replication initiator protein DnaA from Acholeplasma laidlawii (strain PG-8A).